The primary structure comprises 280 residues: MNRFPTERPADFVDDLKVPAAPDALFFIVREGKLLLSDAGELPSGHSLAGQAVIALGRLGERPVFALPLTGEAPAGAQLVGLRQCFGVLPDGLFGLAGLAVQLVDFQRSHQFCGACGTPMRPGEGDRARRCPSCGLRVYPRVAPAIIVLISRGTGPDTEFLLLRGPRQAPDVFTTLAGFVEPSETLEAAVHREVGEEVGVKVRQVQYRFSQPWPFPHSLMLAFTAEYAGGDIVPQPGEVEEAQWFTVSDLPQLPPTFTASRRLLDDALATLRLSGDFATT.

Residue arginine 83 participates in substrate binding. Positions 113, 116, 131, and 134 each coordinate Zn(2+). Residue tyrosine 139 coordinates substrate. Positions 140-268 (PRVAPAIIVL…ASRRLLDDAL (129 aa)) constitute a Nudix hydrolase domain. Positions 177, 193, and 197 each coordinate a divalent metal cation. A Nudix box motif is present at residues 178-199 (GFVEPSETLEAAVHREVGEEVG). 211-218 (QPWPFPHS) lines the substrate pocket. Glutamate 238 lines the a divalent metal cation pocket.

This sequence belongs to the Nudix hydrolase family. NudC subfamily. In terms of assembly, homodimer. Mg(2+) serves as cofactor. The cofactor is Mn(2+). Zn(2+) is required as a cofactor.

The enzyme catalyses a 5'-end NAD(+)-phospho-ribonucleoside in mRNA + H2O = a 5'-end phospho-adenosine-phospho-ribonucleoside in mRNA + beta-nicotinamide D-ribonucleotide + 2 H(+). It carries out the reaction NAD(+) + H2O = beta-nicotinamide D-ribonucleotide + AMP + 2 H(+). It catalyses the reaction NADH + H2O = reduced beta-nicotinamide D-ribonucleotide + AMP + 2 H(+). MRNA decapping enzyme that specifically removes the nicotinamide adenine dinucleotide (NAD) cap from a subset of mRNAs by hydrolyzing the diphosphate linkage to produce nicotinamide mononucleotide (NMN) and 5' monophosphate mRNA. The NAD-cap is present at the 5'-end of some mRNAs and stabilizes RNA against 5'-processing. Has preference for mRNAs with a 5'-end purine. Catalyzes the hydrolysis of a broad range of dinucleotide pyrophosphates. The chain is NAD-capped RNA hydrolase NudC from Deinococcus radiodurans (strain ATCC 13939 / DSM 20539 / JCM 16871 / CCUG 27074 / LMG 4051 / NBRC 15346 / NCIMB 9279 / VKM B-1422 / R1).